The following is a 159-amino-acid chain: Afifavidin (159 aa).

Residues M1–A23 form the signal peptide. The Avidin-like domain maps to G36 to K151. The biotin site is built by N46, S50, Y66, N68, and G74. Cysteines 75 and 104 form a disulfide. S106, T108, and D144 together coordinate biotin.

Belongs to the avidin/streptavidin family. Exhibits a dynamic oligomeric assembly: the apo form self-assembles mostly into toroid-shaped homooctamers, with a small fraction of homodimers, yet upon biotin binding the intact afifavidin consists solely of the dimer.

It is found in the secreted. The exact role played by afifavidin is still obscure. Forms a strong non-covalent complex with biotin and 2-iminobiotin. The chain is Afifavidin from Afifella pfennigii (Rhodobium pfennigii).